Reading from the N-terminus, the 314-residue chain is Olfactory receptor 5G29 (314 aa).

At 1–25 the chain is on the extracellular side; sequence MEEKNQTIVMEFFFLGLTDHLYQKI. Asn5 carries N-linked (GlcNAc...) asparagine glycosylation. A helical transmembrane segment spans residues 26-46; the sequence is ALFITILFVYLVTLGGNLGMI. Residues 47-54 are Cytoplasmic-facing; sequence TLIWADPR. A helical membrane pass occupies residues 55-75; it reads LHTPMYFFLSHLSFVDMCSSS. The Extracellular segment spans residues 76–99; it reads SIAPKMLCDIFAEEKRISFMGCAA. Cysteines 97 and 189 form a disulfide. A helical transmembrane segment spans residues 100–120; it reads QMWFFGFFVGTECFLLASMAY. Residues 121-133 are Cytoplasmic-facing; sequence DRYTAICKPLLYT. The helical transmembrane segment at 134–154 threads the bilayer; it reads LLMSQRVCVHLVVGPYVFAII. The Extracellular portion of the chain corresponds to 155–196; the sequence is NITTHTTLAFCLPFCGSNTINHFFCDVSPLLSLACADSWVNK. Residues 197-217 form a helical membrane-spanning segment; it reads VVLFVLSGAIGVFSGLIIIVS. At 218–237 the chain is on the cytoplasmic side; the sequence is YVSILMTIFKIQTADGKQKA. Residues 238–258 traverse the membrane as a helical segment; that stretch reads FSTCSSHLSAVSILYGTLFFI. The Extracellular segment spans residues 259-271; it reads YVRPSASFSLNIN. Residues 272-292 traverse the membrane as a helical segment; the sequence is KMISLFYTVVIPMLNPLIYSL. Residues 293-312 are Cytoplasmic-facing; sequence RNKEVKGAFRRKVQKKHFPA.

This sequence belongs to the G-protein coupled receptor 1 family.

It localises to the cell membrane. Its function is as follows. Potential odorant receptor. In Mus musculus (Mouse), this protein is Olfactory receptor 5G29.